Reading from the N-terminus, the 166-residue chain is DNA polymerase epsilon subunit C (166 aa).

The tract at residues 112–166 is disordered; the sequence is SPEIDIESEDEVDEANEPEVGEPEVDEAEVEAEVEAEAAEPETHTLDEPRPESSS. Residues 115 to 151 show a composition bias toward acidic residues; sequence IDIESEDEVDEANEPEVGEPEVDEAEVEAEVEAEAAE. Over residues 152–166 the composition is skewed to basic and acidic residues; the sequence is PETHTLDEPRPESSS.

Heterotetramer. Consists of four subunits: POL2, DPB2, DPB3 and DPB4.

The protein resides in the nucleus. As accessory component of the DNA polymerase epsilon (DNA polymerase II) participates in chromosomal DNA replication. The chain is DNA polymerase epsilon subunit C (DPB3) from Kluyveromyces lactis (strain ATCC 8585 / CBS 2359 / DSM 70799 / NBRC 1267 / NRRL Y-1140 / WM37) (Yeast).